The primary structure comprises 230 residues: Small ribosomal subunit protein uS7m (230 aa).

The protein belongs to the universal ribosomal protein uS7 family. Part of the small ribosomal subunit.

It is found in the mitochondrion. One of the primary rRNA binding proteins, it binds directly to 18S rRNA where it nucleates assembly of the head domain of the small subunit. The sequence is that of Small ribosomal subunit protein uS7m (RPS7) from Marchantia polymorpha (Common liverwort).